We begin with the raw amino-acid sequence, 537 residues long: Probable feruloyl esterase ARB_07085 (537 aa).

Residues 1 to 22 form the signal peptide; it reads MVTLPLLLSILPLAAVFSSAAS. Asparagine 67, asparagine 76, and asparagine 189 each carry an N-linked (GlcNAc...) asparagine glycan. 3 disulfide bridges follow: cysteine 196/cysteine 459, cysteine 263/cysteine 280, and cysteine 508/cysteine 529. The active-site Acyl-ester intermediate is serine 197. The Ca(2+) site is built by aspartate 264, aspartate 267, valine 269, aspartate 271, and valine 273. Asparagine 339 carries an N-linked (GlcNAc...) asparagine glycan. Active-site charge relay system residues include aspartate 419 and histidine 458.

This sequence belongs to the tannase family.

The protein resides in the secreted. It catalyses the reaction feruloyl-polysaccharide + H2O = ferulate + polysaccharide.. In terms of biological role, hydrolyzes the feruloyl-arabinose ester bond in arabinoxylans as well as the feruloyl-galactose and feruloyl-arabinose ester bonds. This is Probable feruloyl esterase ARB_07085 from Arthroderma benhamiae (strain ATCC MYA-4681 / CBS 112371) (Trichophyton mentagrophytes).